A 198-amino-acid polypeptide reads, in one-letter code: Large ribosomal subunit protein bL27c (198 aa).

Residues 1–58 (MAMATSMSLNLIGAFKGLSLSSTSSFLRGDLSFSPKTSFTVTLPLENLQAPIPLTIES) constitute a chloroplast transit peptide.

This sequence belongs to the bacterial ribosomal protein bL27 family. In terms of assembly, part of the 50S ribosomal subunit.

The protein localises to the plastid. It is found in the chloroplast. This is Large ribosomal subunit protein bL27c (RPL27) from Arabidopsis thaliana (Mouse-ear cress).